We begin with the raw amino-acid sequence, 100 residues long: RxLR effector protein SFI8 (100 aa).

Positions 1–22 (MRSILYAVLAFAVLARSSAVAA) are cleaved as a signal peptide. Positions 43 to 57 (RSLRVEAQEVIQSGR) match the RxLR-dEER motif. A Calmodulin-binding motif motif is present at residues 78–82 (KPDIK).

This sequence belongs to the RxLR effector family. Interacts with the host calmodulin.

The protein localises to the secreted. It is found in the host nucleus. Its subcellular location is the host cytoplasm. In terms of biological role, effector that suppresses flg22-induced post-translational MAP kinase activation both tomato and Arabidopsis. The perception of highly conserved pathogen- or microbe-associated molecular patterns (PAMPs/MAMPs), such as flg22, triggers converging signaling pathways recruiting MAP kinase cascades and inducing transcriptional re-programming, yielding a generic antimicrobial response. Associates with calmodulin to interfere with plant defense-associated calcium signaling in hosts. In Phytophthora infestans (strain T30-4) (Potato late blight agent), this protein is RxLR effector protein SFI8.